Consider the following 455-residue polypeptide: Probable glycine dehydrogenase (decarboxylating) subunit 1 (455 aa).

The protein belongs to the GcvP family. N-terminal subunit subfamily. In terms of assembly, the glycine cleavage system is composed of four proteins: P, T, L and H. In this organism, the P 'protein' is a heterodimer of two subunits.

It catalyses the reaction N(6)-[(R)-lipoyl]-L-lysyl-[glycine-cleavage complex H protein] + glycine + H(+) = N(6)-[(R)-S(8)-aminomethyldihydrolipoyl]-L-lysyl-[glycine-cleavage complex H protein] + CO2. Functionally, the glycine cleavage system catalyzes the degradation of glycine. The P protein binds the alpha-amino group of glycine through its pyridoxal phosphate cofactor; CO(2) is released and the remaining methylamine moiety is then transferred to the lipoamide cofactor of the H protein. The polypeptide is Probable glycine dehydrogenase (decarboxylating) subunit 1 (Saccharolobus islandicus (strain Y.N.15.51 / Yellowstone #2) (Sulfolobus islandicus)).